Reading from the N-terminus, the 185-residue chain is Ribosome-recycling factor (185 aa).

This sequence belongs to the RRF family.

The protein localises to the cytoplasm. In terms of biological role, responsible for the release of ribosomes from messenger RNA at the termination of protein biosynthesis. May increase the efficiency of translation by recycling ribosomes from one round of translation to another. This is Ribosome-recycling factor from Streptococcus pyogenes serotype M18 (strain MGAS8232).